The following is a 77-amino-acid chain: DNA-directed RNA polymerase subunit epsilon (77 aa).

The protein belongs to the RNA polymerase subunit epsilon family. RNAP is composed of a core of 2 alpha, a beta and a beta' subunit. The core is associated with a delta subunit, and at least one of epsilon or omega. When a sigma factor is associated with the core the holoenzyme is formed, which can initiate transcription.

The enzyme catalyses RNA(n) + a ribonucleoside 5'-triphosphate = RNA(n+1) + diphosphate. In terms of biological role, a non-essential component of RNA polymerase (RNAP). The polypeptide is DNA-directed RNA polymerase subunit epsilon (Lactobacillus delbrueckii subsp. bulgaricus (strain ATCC 11842 / DSM 20081 / BCRC 10696 / JCM 1002 / NBRC 13953 / NCIMB 11778 / NCTC 12712 / WDCM 00102 / Lb 14)).